A 926-amino-acid chain; its full sequence is Eukaryotic translation initiation factor 3 subunit C (926 aa).

Disordered stretches follow at residues 1–36 and 158–309; these read MSRFFATGSDSESESSLSGDEILPKPVGGTFGKQPI and AYKQ…KVKG. Low complexity predominate over residues 8 to 21; the sequence is GSDSESESSLSGDE. Residues 165–189 are compositionally biased toward acidic residues; that stretch reads ESADEDQEKDEDSEASSSSDDDSDE. Residues 207-216 are compositionally biased toward basic and acidic residues; that stretch reads SRSKFLKKEE. Positions 217–243 are enriched in acidic residues; sequence AEDEAESSEDEDWGSDSDESDSDESDD. Residues 258–275 are compositionally biased toward basic and acidic residues; it reads TVTEGDRQAVEKKKEDKA. A compositionally biased stretch (acidic residues) spans 289 to 302; the sequence is EGEEGEEDDNEGGG. Residues 675–851 form the PCI domain; sequence FHMHINLELL…QTVVMHGTEP (177 aa). The segment at 880–926 is disordered; sequence QGSYGGYFNRGDRGDRGDRDQKDQYQRKEGGYMRRGYRRDQQGQSNY. Residues 889–911 are compositionally biased toward basic and acidic residues; that stretch reads RGDRGDRGDRDQKDQYQRKEGGY.

Belongs to the eIF-3 subunit C family. In terms of assembly, component of the eukaryotic translation initiation factor 3 (eIF-3) complex, which is composed of 13 subunits: eif3a, eif3b, eif3c, eif3d, eif3e, eif3f, eif3g, eif3h, eif3i, eif3j, eif3k, eif3l and eif3m.

The protein localises to the cytoplasm. Component of the eukaryotic translation initiation factor 3 (eIF-3) complex, which is involved in protein synthesis of a specialized repertoire of mRNAs and, together with other initiation factors, stimulates binding of mRNA and methionyl-tRNAi to the 40S ribosome. The eIF-3 complex specifically targets and initiates translation of a subset of mRNAs involved in cell proliferation. This is Eukaryotic translation initiation factor 3 subunit C (eif3c) from Xenopus laevis (African clawed frog).